The sequence spans 1386 residues: DNA-directed RNA polymerase subunit beta' (1386 aa).

4 residues coordinate Zn(2+): cysteine 75, cysteine 77, cysteine 90, and cysteine 93. Positions 466, 468, and 470 each coordinate Mg(2+). The Zn(2+) site is built by cysteine 809, cysteine 883, cysteine 890, and cysteine 893.

Belongs to the RNA polymerase beta' chain family. In terms of assembly, the RNAP catalytic core consists of 2 alpha, 1 beta, 1 beta' and 1 omega subunit. When a sigma factor is associated with the core the holoenzyme is formed, which can initiate transcription. Mg(2+) is required as a cofactor. It depends on Zn(2+) as a cofactor.

The enzyme catalyses RNA(n) + a ribonucleoside 5'-triphosphate = RNA(n+1) + diphosphate. DNA-dependent RNA polymerase catalyzes the transcription of DNA into RNA using the four ribonucleoside triphosphates as substrates. This chain is DNA-directed RNA polymerase subunit beta', found in Oleidesulfovibrio alaskensis (strain ATCC BAA-1058 / DSM 17464 / G20) (Desulfovibrio alaskensis).